We begin with the raw amino-acid sequence, 252 residues long: Phosphate import ATP-binding protein PstB 1 (252 aa).

Residues 6–247 (ISSKDLHLYY…PKEKQTEDYI (242 aa)) enclose the ABC transporter domain. 38-45 (GPSGCGKS) provides a ligand contact to ATP.

Belongs to the ABC transporter superfamily. Phosphate importer (TC 3.A.1.7) family. The complex is composed of two ATP-binding proteins (PstB), two transmembrane proteins (PstC and PstA) and a solute-binding protein (PstS).

It is found in the cell membrane. The catalysed reaction is phosphate(out) + ATP + H2O = ADP + 2 phosphate(in) + H(+). Part of the ABC transporter complex PstSACB involved in phosphate import. Responsible for energy coupling to the transport system. The chain is Phosphate import ATP-binding protein PstB 1 from Enterococcus faecalis (strain ATCC 700802 / V583).